The primary structure comprises 189 residues: Peptidyl-tRNA hydrolase (189 aa).

Tyr14 serves as a coordination point for tRNA. His19 acts as the Proton acceptor in catalysis. Phe64, Asn66, and Asn112 together coordinate tRNA.

This sequence belongs to the PTH family. As to quaternary structure, monomer.

It localises to the cytoplasm. The enzyme catalyses an N-acyl-L-alpha-aminoacyl-tRNA + H2O = an N-acyl-L-amino acid + a tRNA + H(+). In terms of biological role, hydrolyzes ribosome-free peptidyl-tRNAs (with 1 or more amino acids incorporated), which drop off the ribosome during protein synthesis, or as a result of ribosome stalling. Catalyzes the release of premature peptidyl moieties from peptidyl-tRNA molecules trapped in stalled 50S ribosomal subunits, and thus maintains levels of free tRNAs and 50S ribosomes. In Zymomonas mobilis subsp. mobilis (strain ATCC 31821 / ZM4 / CP4), this protein is Peptidyl-tRNA hydrolase.